Reading from the N-terminus, the 427-residue chain is Stemphyloxin II biosynthesis cluster transcription factor sthR (427 aa).

The zn(2)-C6 fungal-type DNA-binding region spans 15–45 (CDRCRKQKLRCPPDKDDMGTCGRCLRAGVAC). The segment at 51–70 (KPRGRSQKHGISTDGTSHVS) is disordered. The span at 59 to 69 (HGISTDGTSHV) shows a compositional bias: polar residues.

The protein localises to the nucleus. In terms of biological role, transcription factor that regulates the expression of the gene cluster that mediates the biosynthesis of the phytotoxin stemphyloxin II. The protein is Stemphyloxin II biosynthesis cluster transcription factor sthR of Phaeosphaeria nodorum (strain SN15 / ATCC MYA-4574 / FGSC 10173) (Glume blotch fungus).